The chain runs to 463 residues: Sporulation-specific protein 22 (463 aa).

An N-terminal signal peptide occupies residues 1 to 25 (MNRITRKSCLFAIIFASLFVTHALG). LRR repeat units lie at residues 127–147 (SPELIRIQAGNLNKIEGLFQL), 185–206 (IEIIKDIVISDTSLANIENFNK), 207–233 (VQEIDTFNINNNRFLETIHSNVKTIRG), 251–275 (LREVENITIRDTSLVYLPQLTKVKS), and 302–325 (INNVNLIKVNLENLTDIQGGLMIA). Residues Asn-256, Asn-314, and Asn-327 are each glycosylated (N-linked (GlcNAc...) asparagine). A lipid anchor (GPI-anchor amidated asparagine) is attached at Asn-440. A propeptide spans 441-463 (SANPSMQLDPLLFGTCLVAMLLF) (removed in mature form).

The protein belongs to the SPS2 family.

Its subcellular location is the cell membrane. Functionally, redundant with SPS2 for the organization of the beta-glucan layer of the spore wall. In Saccharomyces cerevisiae (strain ATCC 204508 / S288c) (Baker's yeast), this protein is Sporulation-specific protein 22 (SPS22).